A 423-amino-acid polypeptide reads, in one-letter code: Mannose-6-phosphate isomerase (423 aa).

N-acetylalanine is present on alanine 2. Phosphoserine is present on residues serine 102 and serine 108. 4 residues coordinate Zn(2+): glutamine 110, histidine 112, glutamate 137, and histidine 276. Residue arginine 295 is part of the active site.

It belongs to the mannose-6-phosphate isomerase type 1 family. Requires Zn(2+) as cofactor.

The protein resides in the cytoplasm. It catalyses the reaction D-mannose 6-phosphate = D-fructose 6-phosphate. It participates in nucleotide-sugar biosynthesis; GDP-alpha-D-mannose biosynthesis; alpha-D-mannose 1-phosphate from D-fructose 6-phosphate: step 1/2. Functionally, isomerase that catalyzes the interconversion of fructose-6-P and mannose-6-P and has a critical role in the supply of D-mannose derivatives required for many eukaryotic glycosylation reactions. This chain is Mannose-6-phosphate isomerase (MPI), found in Bos taurus (Bovine).